The sequence spans 426 residues: MRVLFYVSILVIIASVHTQLISVHVIFRHGARAPVLNVTSEEAKSYFYRGLGQLTDEGFEQARLMGKVLRDRYVNSFVDARMLSSQLLFRSSPVERCLMTLQTVGNTMFPNATPPVQTVAKPDDFLLVPKLDCDFQLGEWDNYFNLTESDKKMARKNPWFVSDKALRKAVTKTDFLQDRGGENLPALILEKEAGLAVPSWFNEGAYKESLHVFYSALAVMSSVGEYKSSKGIRIKSGLLMEKVFNDIQEKVRCHEKKEVSNIKCDIHKLQVFSSHDLLILPILETLGIREEVLGKDMPPEFMSTIIIETMIVDNSPVVKVLFRKNPREITLRDVTGFVKNCPPGQPLCPVQRFTSCCNEFITSDPKSECYAETTVEKQSEWVMTPLSWIIVAIAILLLIALILMTYFVIRYKNRSIVNIKKLSLEN.

A signal peptide spans 1–18; the sequence is MRVLFYVSILVIIASVHT. The Extracellular segment spans residues 19-388; the sequence is QLISVHVIFR…SEWVMTPLSW (370 aa). His-29 serves as the catalytic Nucleophile. N-linked (GlcNAc...) asparagine glycosylation is found at Asn-37 and Asn-145. Cys-133 and Cys-369 are joined by a disulfide. The active-site Proton donor is Asp-276. A helical membrane pass occupies residues 389–409; that stretch reads IIVAIAILLLIALILMTYFVI. The Cytoplasmic portion of the chain corresponds to 410–426; that stretch reads RYKNRSIVNIKKLSLEN.

It belongs to the histidine acid phosphatase family.

The protein resides in the membrane. It catalyses the reaction a phosphate monoester + H2O = an alcohol + phosphate. The protein is Putative acid phosphatase 1 of Caenorhabditis elegans.